Consider the following 259-residue polypeptide: Imidazole glycerol phosphate synthase subunit HisF (259 aa).

Residues D11 and D130 contribute to the active site.

It belongs to the HisA/HisF family. Heterodimer of HisH and HisF.

It localises to the cytoplasm. It carries out the reaction 5-[(5-phospho-1-deoxy-D-ribulos-1-ylimino)methylamino]-1-(5-phospho-beta-D-ribosyl)imidazole-4-carboxamide + L-glutamine = D-erythro-1-(imidazol-4-yl)glycerol 3-phosphate + 5-amino-1-(5-phospho-beta-D-ribosyl)imidazole-4-carboxamide + L-glutamate + H(+). It participates in amino-acid biosynthesis; L-histidine biosynthesis; L-histidine from 5-phospho-alpha-D-ribose 1-diphosphate: step 5/9. Its function is as follows. IGPS catalyzes the conversion of PRFAR and glutamine to IGP, AICAR and glutamate. The HisF subunit catalyzes the cyclization activity that produces IGP and AICAR from PRFAR using the ammonia provided by the HisH subunit. The polypeptide is Imidazole glycerol phosphate synthase subunit HisF (Acidovorax ebreus (strain TPSY) (Diaphorobacter sp. (strain TPSY))).